The following is a 138-amino-acid chain: Small ribosomal subunit protein uS12 (138 aa).

The disordered stretch occupies residues 1–20 (MPTISQLINHGRSAKTSKSK). At Asp-102 the chain carries 3-methylthioaspartic acid. Positions 116–138 (DAAGVDKRKQGRSIYGTKKPKEN) are disordered.

Belongs to the universal ribosomal protein uS12 family. Part of the 30S ribosomal subunit. Contacts proteins S8 and S17. May interact with IF1 in the 30S initiation complex.

Functionally, with S4 and S5 plays an important role in translational accuracy. Interacts with and stabilizes bases of the 16S rRNA that are involved in tRNA selection in the A site and with the mRNA backbone. Located at the interface of the 30S and 50S subunits, it traverses the body of the 30S subunit contacting proteins on the other side and probably holding the rRNA structure together. The combined cluster of proteins S8, S12 and S17 appears to hold together the shoulder and platform of the 30S subunit. This Metamycoplasma arthritidis (strain 158L3-1) (Mycoplasma arthritidis) protein is Small ribosomal subunit protein uS12.